A 310-amino-acid polypeptide reads, in one-letter code: p-hydroxybenzoic acid efflux pump subunit AaeA (310 aa).

The helical transmembrane segment at 12-32 threads the bilayer; that stretch reads AITVVLVILAFIAIFNAWVYY.

It belongs to the membrane fusion protein (MFP) (TC 8.A.1) family.

It localises to the cell inner membrane. Functionally, forms an efflux pump with AaeB. The chain is p-hydroxybenzoic acid efflux pump subunit AaeA from Escherichia coli O139:H28 (strain E24377A / ETEC).